Here is a 177-residue protein sequence, read N- to C-terminus: Large ribosomal subunit protein uL6 (177 aa).

This sequence belongs to the universal ribosomal protein uL6 family. As to quaternary structure, part of the 50S ribosomal subunit.

Functionally, this protein binds to the 23S rRNA, and is important in its secondary structure. It is located near the subunit interface in the base of the L7/L12 stalk, and near the tRNA binding site of the peptidyltransferase center. In Bradyrhizobium sp. (strain ORS 278), this protein is Large ribosomal subunit protein uL6.